We begin with the raw amino-acid sequence, 176 residues long: Adenine phosphoribosyltransferase (176 aa).

Belongs to the purine/pyrimidine phosphoribosyltransferase family. Homodimer.

The protein resides in the cytoplasm. The enzyme catalyses AMP + diphosphate = 5-phospho-alpha-D-ribose 1-diphosphate + adenine. It functions in the pathway purine metabolism; AMP biosynthesis via salvage pathway; AMP from adenine: step 1/1. Catalyzes a salvage reaction resulting in the formation of AMP, that is energically less costly than de novo synthesis. In Borrelia garinii subsp. bavariensis (strain ATCC BAA-2496 / DSM 23469 / PBi) (Borreliella bavariensis), this protein is Adenine phosphoribosyltransferase.